Reading from the N-terminus, the 127-residue chain is Protein SPIRAL1-like 4 (127 aa).

The interval 1–127 (MGKARGVNSG…FGSGPCGSDK (127 aa)) is disordered. The segment covering 39–48 (TTTTTTTTTT) has biased composition (low complexity). A Phosphoserine modification is found at S80. The span at 80 to 94 (SPNNYYRSDGQNCGN) shows a compositional bias: polar residues.

It belongs to the SPIRAL1 family. As to expression, ubiquitous.

Its function is as follows. Acts redundantly with SPR1 in maintaining the cortical microtubules organization essential for anisotropic cell growth. The sequence is that of Protein SPIRAL1-like 4 (SP1L4) from Arabidopsis thaliana (Mouse-ear cress).